The primary structure comprises 37 residues: Esculentin-2B (37 aa).

Cysteine 31 and cysteine 37 are oxidised to a cystine.

Expressed by the skin glands.

It localises to the secreted. Its function is as follows. Antibacterial activity against Gram-positive bacterium S.aureus and Gram-negative bacterium E.coli. Has activity against C.albicans. The protein is Esculentin-2B of Lithobates berlandieri (Rio Grande leopard frog).